The primary structure comprises 420 residues: Tyrosine--tRNA ligase (420 aa).

Y33 is an L-tyrosine binding site. The 'HIGH' region signature appears at P38–H47. Positions 167 and 171 each coordinate L-tyrosine. Residues K227–S231 carry the 'KMSKS' region motif. K230 provides a ligand contact to ATP. The 67-residue stretch at P352–Y418 folds into the S4 RNA-binding domain.

The protein belongs to the class-I aminoacyl-tRNA synthetase family. TyrS type 1 subfamily. As to quaternary structure, homodimer.

It is found in the cytoplasm. The enzyme catalyses tRNA(Tyr) + L-tyrosine + ATP = L-tyrosyl-tRNA(Tyr) + AMP + diphosphate + H(+). In terms of biological role, catalyzes the attachment of tyrosine to tRNA(Tyr) in a two-step reaction: tyrosine is first activated by ATP to form Tyr-AMP and then transferred to the acceptor end of tRNA(Tyr). This is Tyrosine--tRNA ligase from Corynebacterium diphtheriae (strain ATCC 700971 / NCTC 13129 / Biotype gravis).